A 397-amino-acid polypeptide reads, in one-letter code: Odorant receptor 22a (397 aa).

At 1 to 49 (MLSKFFPHIKEKPLSERVKSRDAFIYLDRVMWSFGWTEPENKRWILPYK) the chain is on the cytoplasmic side. A helical transmembrane segment spans residues 50 to 70 (LWLAFVNIVMLILLPISISIE). Residues 71 to 86 (YLHRFKTFSAGEFLSS) are Extracellular-facing. Residues 87–107 (LEIGVNMYGSSFKCAFTLIGF) form a helical membrane-spanning segment. Topologically, residues 108-136 (KKRQEAKVLLDQLDKRCLSDKERSTVHRY) are cytoplasmic. The chain crosses the membrane as a helical span at residues 137 to 157 (VAMGNFFDILYHIFYSTFVVM). Residues 158-182 (NFPYFLLERRHAWRMYFPYIDSDEQ) are Extracellular-facing. The helical transmembrane segment at 183–203 (FYISSIAECFLMTEAIYMDLC) threads the bilayer. Residues 204 to 263 (TDVCPLISMLMARCHISLLKQRLRNLRSKPGRTEDEYLEELTECIRDHRLLLDYVDALRP) lie on the Cytoplasmic side of the membrane. The chain crosses the membrane as a helical span at residues 264–280 (VFSGTIFVQFLLIGTVL). Topologically, residues 281–286 (GLSMIN) are extracellular. A helical membrane pass occupies residues 287–304 (LMFFSTFWTGVATCLFMF). The Cytoplasmic segment spans residues 305 to 356 (DVSMETFPFCYLCNMIIDDCQEMSNCLFQSDWTSADRRYKSTLVYFLHNLQQ). Residues 357–377 (PITLTAGGVFPISMQTNLAMV) traverse the membrane as a helical segment. The Extracellular segment spans residues 378–397 (KLAFSVVTVIKQFNLAERFQ).

The protein belongs to the insect chemoreceptor superfamily. Heteromeric odorant receptor channel (TC 1.A.69) family. Or2a subfamily. Interacts with Orco, via conserved C-terminal cytoplasmic loops. Complexes exist early in the endomembrane system in olfactory sensory neurons (OSNs), coupling these complexes to the conserved ciliary trafficking pathway. Interacts with snmp1. Expressed with Orco in 17-20 sensory neurons on the medial-proximal edge of the antenna. Expressed in the ab3A neuron which responds to ethyl butyrate.

Its subcellular location is the cell membrane. In terms of biological role, odorant receptor which mediates acceptance or avoidance behavior, depending on its substrates. The odorant receptor repertoire encodes a large collection of odor stimuli that vary widely in identity, intensity, and duration. Involved in the behavioral responses ethyl butyrate and to esters in more general. Complexes with Orco to form odorant-sensing units, providing sensitive and prolonged odorant signaling and calcium permeability. They are necessary and sufficient to promote functional reconstitution of odor-evoked signaling in sensory neurons that normally respond only to carbon dioxide. The protein is Odorant receptor 22a (Or22a) of Drosophila melanogaster (Fruit fly).